The sequence spans 1434 residues: Ankyrin and armadillo repeat-containing protein (1434 aa).

Residues 309-329 form a helical membrane-spanning segment; the sequence is IRRGIGYLKLICFLIPFLLSL. ANK repeat units follow at residues 532–561, 569–598, 602–631, 638–667, and 671–701; these read AGYTIFHHAALHNRVSIICQLCNANFKVNQ, QGPTPLHLAAQACSLETTVCLLCSKADYTL, RGWMPIHFAAFYDNVCIIIALCRKDPSLLE, NQCTPLLLAATSGALDTIQYLFSIGANWRK, and KGNNIIHLSVLTFHTEVLKYIIKLNIPELPV. 6 ARM repeats span residues 732–771, 773–812, 814–852, 855–894, 897–936, and 1072–1112; these read DQYWRCILDAGTIPALINLLKSSKIKLQCKTVGLLSNIST, KSAVHALVEAGGIPSLINLLVCDEPEVHSRCAVILYDIAQ, ENKDVIAKYNGIPSLINLLNLNIENVLVNVMNCIRVLCI, ENNQRAVREHKGLPYLIRFLSSDSDVLKAVSSAAIAEVGR, KEIQDAIAMEGAIPPLVALFKGKQISVQMKGAMAVESLAS, and PVSQ…CIVL.

In terms of tissue distribution, ubiquitously expressed with highest level in pancreas and lowest in skeletal muscle.

The protein localises to the membrane. The chain is Ankyrin and armadillo repeat-containing protein (ANKAR) from Homo sapiens (Human).